Reading from the N-terminus, the 247-residue chain is MSVTMREMLEAGCHFGHQTRFWNPKMAPFIFGHRNKIHIINLEKTLPMFQDALKYVRQLAANRGTVLFVGTKRQSREILAEEAGRAGMPYVDARWLGGMLTNFKTVKISIKRLKDMEAAKEAGALETMSKKEALMFEREMEKLEKSIGGIKDMGGIPDAIFVVDVGYHKIAVTEANKLGIPVIGVVDTNHSPEGIDYVIPGNDDSSKAVALYVRGVADAILEGRANAVQEVVEAARGDDEFVEVQEG.

It belongs to the universal ribosomal protein uS2 family.

The chain is Small ribosomal subunit protein uS2 from Cupriavidus metallidurans (strain ATCC 43123 / DSM 2839 / NBRC 102507 / CH34) (Ralstonia metallidurans).